The following is a 457-amino-acid chain: Argininosuccinate lyase (457 aa).

The protein belongs to the lyase 1 family. Argininosuccinate lyase subfamily.

Its subcellular location is the cytoplasm. It carries out the reaction 2-(N(omega)-L-arginino)succinate = fumarate + L-arginine. It participates in amino-acid biosynthesis; L-arginine biosynthesis; L-arginine from L-ornithine and carbamoyl phosphate: step 3/3. This Pasteurella multocida (strain Pm70) protein is Argininosuccinate lyase.